A 168-amino-acid polypeptide reads, in one-letter code: Large ribosomal subunit protein uL10 (168 aa).

The protein belongs to the universal ribosomal protein uL10 family. Part of the ribosomal stalk of the 50S ribosomal subunit. The N-terminus interacts with L11 and the large rRNA to form the base of the stalk. The C-terminus forms an elongated spine to which L12 dimers bind in a sequential fashion forming a multimeric L10(L12)X complex.

In terms of biological role, forms part of the ribosomal stalk, playing a central role in the interaction of the ribosome with GTP-bound translation factors. The sequence is that of Large ribosomal subunit protein uL10 (rplJ) from Buchnera aphidicola subsp. Baizongia pistaciae (strain Bp).